Here is a 182-residue protein sequence, read N- to C-terminus: Crossover junction endodeoxyribonuclease RuvC (182 aa).

Catalysis depends on residues Asp-7, Glu-69, and Asp-141. Positions 7, 69, and 141 each coordinate Mg(2+).

Belongs to the RuvC family. As to quaternary structure, homodimer which binds Holliday junction (HJ) DNA. The HJ becomes 2-fold symmetrical on binding to RuvC with unstacked arms; it has a different conformation from HJ DNA in complex with RuvA. In the full resolvosome a probable DNA-RuvA(4)-RuvB(12)-RuvC(2) complex forms which resolves the HJ. Mg(2+) serves as cofactor.

It localises to the cytoplasm. The catalysed reaction is Endonucleolytic cleavage at a junction such as a reciprocal single-stranded crossover between two homologous DNA duplexes (Holliday junction).. In terms of biological role, the RuvA-RuvB-RuvC complex processes Holliday junction (HJ) DNA during genetic recombination and DNA repair. Endonuclease that resolves HJ intermediates. Cleaves cruciform DNA by making single-stranded nicks across the HJ at symmetrical positions within the homologous arms, yielding a 5'-phosphate and a 3'-hydroxyl group; requires a central core of homology in the junction. The consensus cleavage sequence is 5'-(A/T)TT(C/G)-3'. Cleavage occurs on the 3'-side of the TT dinucleotide at the point of strand exchange. HJ branch migration catalyzed by RuvA-RuvB allows RuvC to scan DNA until it finds its consensus sequence, where it cleaves and resolves the cruciform DNA. This is Crossover junction endodeoxyribonuclease RuvC from Paracidovorax citrulli (strain AAC00-1) (Acidovorax citrulli).